A 276-amino-acid chain; its full sequence is Pantothenate synthetase (276 aa).

26–33 is a binding site for ATP; the sequence is MGFLHAGH. H33 serves as the catalytic Proton donor. Q57 lines the (R)-pantoate pocket. Q57 is a beta-alanine binding site. An ATP-binding site is contributed by 143–146; sequence GQKD. A (R)-pantoate-binding site is contributed by Q149. Residues I172 and 180-183 each bind ATP; that span reads MSSR.

The protein belongs to the pantothenate synthetase family. In terms of assembly, homodimer.

Its subcellular location is the cytoplasm. It carries out the reaction (R)-pantoate + beta-alanine + ATP = (R)-pantothenate + AMP + diphosphate + H(+). Its pathway is cofactor biosynthesis; (R)-pantothenate biosynthesis; (R)-pantothenate from (R)-pantoate and beta-alanine: step 1/1. In terms of biological role, catalyzes the condensation of pantoate with beta-alanine in an ATP-dependent reaction via a pantoyl-adenylate intermediate. This is Pantothenate synthetase from Herpetosiphon aurantiacus (strain ATCC 23779 / DSM 785 / 114-95).